Here is a 202-residue protein sequence, read N- to C-terminus: Hydrogenase expression/formation protein HoxM (202 aa).

The Ni(2+) site is built by glutamate 15, aspartate 61, and histidine 92.

Belongs to the peptidase A31 family.

In terms of biological role, absolutely required for hydrogenase activity. Mediates the attachment of hydrogenase to the bacterial membrane; attachment is a requirement for enzymatic activity. This Cupriavidus necator (strain ATCC 17699 / DSM 428 / KCTC 22496 / NCIMB 10442 / H16 / Stanier 337) (Ralstonia eutropha) protein is Hydrogenase expression/formation protein HoxM (hoxM).